Reading from the N-terminus, the 689-residue chain is MTTQNFLAEIGTEELPPKALKKLATAFAENVENELNQAGLSFEKVEWFAAPRRLAVKALGLATAQPSKKIEKRGPAVSAAFDADGKPTKAAEGWARGCGISVEQAERLATDKGEWLVHRAVIEGQPTKNLLVDIISRSLANLPIPKMMRWGDKTEQFVRPVHTVTLFFGGELIEGEILGVKIANVVRGHRFLGEREFTISHADEYLTALREKGSVIADFNERKALILAKSQEKATALGGVADIEEDLLDEVTSLVEFPNVLTAKFEERFLAVPAEALVYTMKGDQKYFPIYDKDGKLLPHFIFVSNINPEDPTAIIEGNEKVVRPRLTDAEFFFKTDLKQRLEDRLPRLETVLFQQQLGTLRDKTARIEALAGEIAAQIGADKAKAERAGLLSKCDLMTNMVFEFTDTQGVMGMHYARHDGEDEEVAVALNEQYMPRFAGDELPKSLVACSVALADKFDTLTGIFGIGQAPKGSADPFALRRAALGSLRIIVEKNLPLDLEDLVRKSAALFGDKLTNANVVDDVVDFMLGRFRAWYQDEGIAVDVIQAVLARRPTKPADFDARVRAVSHFRTLDSAEALAAANKRVSNILAKVEGEISTEIDRSLLVEAEEKALAEQVISLQTELAPTFANGEYQTALDRLASLRETVDSFFEKVMVNAEDANLRRNRQAILNNLRNLFLQVADISVLQ.

This sequence belongs to the class-II aminoacyl-tRNA synthetase family. In terms of assembly, tetramer of two alpha and two beta subunits.

Its subcellular location is the cytoplasm. It catalyses the reaction tRNA(Gly) + glycine + ATP = glycyl-tRNA(Gly) + AMP + diphosphate. The polypeptide is Glycine--tRNA ligase beta subunit (Actinobacillus pleuropneumoniae serotype 3 (strain JL03)).